Here is a 422-residue protein sequence, read N- to C-terminus: Phospholipase D Z (422 aa).

The first 18 residues, 1–18 (MMMKLLFLIALFGCVVNS), serve as a signal peptide directing secretion. N53 is a glycosylation site (N-linked (GlcNAc...) asparagine). A PLD phosphodiesterase 1 domain is found at 148–175 (GAGILHTKVIVVDQVSAYLGSANLDWRS). Active-site residues include H153, K155, and D160. Residues N225 and N320 are each glycosylated (N-linked (GlcNAc...) asparagine). The 27-residue stretch at 357–383 (FTRVNHAKYMVTDEQSYVGTSNWSEDY) folds into the PLD phosphodiesterase 2 domain. Catalysis depends on residues H362, K364, and D369. N-linked (GlcNAc...) asparagine glycosylation occurs at N378.

Belongs to the phospholipase D family.

It carries out the reaction a 1,2-diacyl-sn-glycero-3-phosphocholine + H2O = a 1,2-diacyl-sn-glycero-3-phosphate + choline + H(+). Inhibited by butan-1-ol. Its function is as follows. Hydrolyzes membrane phospholipids, such as PtdCho (phosphatidylcholine), producing the free headgroup and PtdOH (phosphatidic acid; signaling molecule on its own). This chain is Phospholipase D Z (pldZ), found in Dictyostelium discoideum (Social amoeba).